Here is a 469-residue protein sequence, read N- to C-terminus: Serine hydroxymethyltransferase, cytosolic (469 aa).

The residue at position 20 (threonine 20) is a Phosphothreonine. A Phosphoserine modification is found at serine 26. The residue at position 248 (lysine 248) is an N6-(pyridoxal phosphate)lysine. At serine 429 the chain carries Phosphoserine. A Glycyl lysine isopeptide (Lys-Gly) (interchain with G-Cter in ubiquitin) cross-link involves residue lysine 456.

It belongs to the SHMT family. In terms of assembly, homotetramer. Requires pyridoxal 5'-phosphate as cofactor.

It localises to the cytoplasm. It carries out the reaction (6R)-5,10-methylene-5,6,7,8-tetrahydrofolate + glycine + H2O = (6S)-5,6,7,8-tetrahydrofolate + L-serine. Its pathway is one-carbon metabolism; tetrahydrofolate interconversion. Interconversion of serine and glycine. The chain is Serine hydroxymethyltransferase, cytosolic from Saccharomyces cerevisiae (strain ATCC 204508 / S288c) (Baker's yeast).